The sequence spans 162 residues: Crossover junction endodeoxyribonuclease RuvC (162 aa).

Active-site residues include Asp7, Glu67, and Asp140. The Mg(2+) site is built by Asp7, Glu67, and Asp140.

It belongs to the RuvC family. As to quaternary structure, homodimer which binds Holliday junction (HJ) DNA. The HJ becomes 2-fold symmetrical on binding to RuvC with unstacked arms; it has a different conformation from HJ DNA in complex with RuvA. In the full resolvosome a probable DNA-RuvA(4)-RuvB(12)-RuvC(2) complex forms which resolves the HJ. It depends on Mg(2+) as a cofactor.

Its subcellular location is the cytoplasm. The catalysed reaction is Endonucleolytic cleavage at a junction such as a reciprocal single-stranded crossover between two homologous DNA duplexes (Holliday junction).. Its function is as follows. The RuvA-RuvB-RuvC complex processes Holliday junction (HJ) DNA during genetic recombination and DNA repair. Endonuclease that resolves HJ intermediates. Cleaves cruciform DNA by making single-stranded nicks across the HJ at symmetrical positions within the homologous arms, yielding a 5'-phosphate and a 3'-hydroxyl group; requires a central core of homology in the junction. The consensus cleavage sequence is 5'-(A/T)TT(C/G)-3'. Cleavage occurs on the 3'-side of the TT dinucleotide at the point of strand exchange. HJ branch migration catalyzed by RuvA-RuvB allows RuvC to scan DNA until it finds its consensus sequence, where it cleaves and resolves the cruciform DNA. This is Crossover junction endodeoxyribonuclease RuvC from Wolinella succinogenes (strain ATCC 29543 / DSM 1740 / CCUG 13145 / JCM 31913 / LMG 7466 / NCTC 11488 / FDC 602W) (Vibrio succinogenes).